The sequence spans 215 residues: Porin MspC (215 aa).

A signal peptide spans 1 to 31 (MKAISRVLIAMISALAAAVAGLFVSAGTSHA).

The protein belongs to the mycobacterial porin (TC 1.B.24) family. As to quaternary structure, octamers. Probably forms a goblet with the wide end on the exterior of the outer membrane and a central channel. It is not known if mixed oligomers of MspC with other Msp subunits form in vivo.

The protein resides in the cell outer membrane. The protein localises to the secreted. It localises to the cell wall. In terms of biological role, a constitutively expressed secondary porin, forms a water-filled channel which favors the permeation of cations and less efficiently phosphate. There are about 2400 porins in wild-type, 800 in an mspA deletion and 150 in a double mspA-mspC deletion. The sequence is that of Porin MspC (mspC) from Mycolicibacterium smegmatis (strain ATCC 700084 / mc(2)155) (Mycobacterium smegmatis).